A 396-amino-acid polypeptide reads, in one-letter code: Phosphoglycerate kinase (396 aa).

Residues 21–23, R36, 59–62, R113, and R146 each bind substrate; these read DLN and HLGR. Residues K197, E319, and 345–348 each bind ATP; that span reads GGDT.

It belongs to the phosphoglycerate kinase family. As to quaternary structure, monomer.

It localises to the cytoplasm. The catalysed reaction is (2R)-3-phosphoglycerate + ATP = (2R)-3-phospho-glyceroyl phosphate + ADP. It functions in the pathway carbohydrate degradation; glycolysis; pyruvate from D-glyceraldehyde 3-phosphate: step 2/5. The chain is Phosphoglycerate kinase from Legionella pneumophila (strain Paris).